The chain runs to 216 residues: MNIILLGPPGAGKGTQAQRLVERHGMKQLSTGDMLRAAVKAETPVGLKAKAVMEAGQLVSDEIVSALIGDELDAMPAGQGAIFDGYPRTAPQAESLDAILESRGRKLDHVIELDVNEDALVERITGRYTCATCGKGYHDKFEKPAVEGTCDKCGGHEFKRRPDDNEETVRTRMAEYRAKTAPILPIYESRGIVSRVDGMADMDDVTAAIEAILAAR.

An ATP-binding site is contributed by 10-15 (GAGKGT). An NMP region spans residues 30–59 (STGDMLRAAVKAETPVGLKAKAVMEAGQLV). AMP-binding positions include T31, R36, 57–59 (QLV), 85–88 (GYPR), and Q92. The LID stretch occupies residues 126-164 (GRYTCATCGKGYHDKFEKPAVEGTCDKCGGHEFKRRPDD). R127 provides a ligand contact to ATP. Residues C130, C133, C150, and C153 each coordinate Zn(2+). R161 and R172 together coordinate AMP. Position 200 (A200) interacts with ATP.

This sequence belongs to the adenylate kinase family. In terms of assembly, monomer.

The protein resides in the cytoplasm. It carries out the reaction AMP + ATP = 2 ADP. It participates in purine metabolism; AMP biosynthesis via salvage pathway; AMP from ADP: step 1/1. In terms of biological role, catalyzes the reversible transfer of the terminal phosphate group between ATP and AMP. Plays an important role in cellular energy homeostasis and in adenine nucleotide metabolism. The sequence is that of Adenylate kinase from Novosphingobium aromaticivorans (strain ATCC 700278 / DSM 12444 / CCUG 56034 / CIP 105152 / NBRC 16084 / F199).